Here is a 225-residue protein sequence, read N- to C-terminus: NAD(P)H-quinone oxidoreductase subunit K, chloroplastic (225 aa).

[4Fe-4S] cluster-binding residues include Cys43, Cys44, Cys108, and Cys139.

Belongs to the complex I 20 kDa subunit family. As to quaternary structure, NDH is composed of at least 16 different subunits, 5 of which are encoded in the nucleus. [4Fe-4S] cluster is required as a cofactor.

It localises to the plastid. The protein localises to the chloroplast thylakoid membrane. It carries out the reaction a plastoquinone + NADH + (n+1) H(+)(in) = a plastoquinol + NAD(+) + n H(+)(out). The catalysed reaction is a plastoquinone + NADPH + (n+1) H(+)(in) = a plastoquinol + NADP(+) + n H(+)(out). In terms of biological role, NDH shuttles electrons from NAD(P)H:plastoquinone, via FMN and iron-sulfur (Fe-S) centers, to quinones in the photosynthetic chain and possibly in a chloroplast respiratory chain. The immediate electron acceptor for the enzyme in this species is believed to be plastoquinone. Couples the redox reaction to proton translocation, and thus conserves the redox energy in a proton gradient. This is NAD(P)H-quinone oxidoreductase subunit K, chloroplastic from Carica papaya (Papaya).